The primary structure comprises 353 residues: Phosphate acyltransferase (353 aa).

This sequence belongs to the PlsX family. Homodimer. Probably interacts with PlsY.

The protein resides in the cytoplasm. It catalyses the reaction a fatty acyl-[ACP] + phosphate = an acyl phosphate + holo-[ACP]. It functions in the pathway lipid metabolism; phospholipid metabolism. In terms of biological role, catalyzes the reversible formation of acyl-phosphate (acyl-PO(4)) from acyl-[acyl-carrier-protein] (acyl-ACP). This enzyme utilizes acyl-ACP as fatty acyl donor, but not acyl-CoA. This is Phosphate acyltransferase from Rhodopseudomonas palustris (strain BisB18).